The following is a 55-amino-acid chain: Large ribosomal subunit protein bL33 (55 aa).

The protein belongs to the bacterial ribosomal protein bL33 family.

The sequence is that of Large ribosomal subunit protein bL33 from Rhodopseudomonas palustris (strain BisA53).